Consider the following 126-residue polypeptide: Heavy metal-associated isoprenylated plant protein 14 (126 aa).

Residues 3–69 (AKNAVLQLSI…LCNTEIVSVD (67 aa)) form the HMA domain. At Cys-123 the chain carries Cysteine methyl ester. A lipid anchor (S-farnesyl cysteine) is attached at Cys-123. A propeptide spans 124 to 126 (VIM) (removed in mature form).

This sequence belongs to the HIPP family.

Its function is as follows. Probable heavy-metal-binding protein. The polypeptide is Heavy metal-associated isoprenylated plant protein 14 (Arabidopsis thaliana (Mouse-ear cress)).